Here is a 423-residue protein sequence, read N- to C-terminus: F-box/LRR-repeat protein 2 (423 aa).

Residues 9 to 55 form the F-box domain; that stretch reads GLINKKLPKELLLRIFSFLDIVTLCRCAQISKAWNILALDGSNWQRI. LRR repeat units follow at residues 61 to 87, 88 to 113, 114 to 139, 140 to 165, 166 to 191, 192 to 217, 218 to 243, 244 to 269, 270 to 295, 296 to 321, 322 to 350, 351 to 375, and 376 to 401; these read QTDVEGRVVENISKRCGGFLRKLSLRG, CIGVGDSSLKTFAQNCRNIEHLNLNG, CTKITDSTCYSLSRFCSKLKHLDLTS, CVSITNSSLKGISEGCRHLEYLNLSW, CDQITKDGVEALVRGCRGLRALLLRG, CTQLEDEALKHIQNYCHELVSLNLQS, CSRVTDDGVVQLCRGCPRLQALCLSG, CGSLTDASLTALALNCPRLQILEAAR, CSHLTDAGFTLLARNCHDLEKMDLEE, CILITDRTLTQLSIHCPKLQALSLSH, CELITDDGILHLSNSPCGHERLRVLELDN, CLLITDVALEHLEHCRGLERLELYD, and CQQVTRAGIKRMRAQLPHVRVHAYFA. Residues 80–90 are interaction with Calmodulin; sequence LRKLSLRGCIG. Lysine 201 participates in a covalent cross-link: Glycyl lysine isopeptide (Lys-Gly) (interchain with G-Cter in ubiquitin). The residue at position 404 (threonine 404) is a Phosphothreonine. A lipid anchor (S-geranylgeranyl cysteine) is attached at cysteine 420. The CAAX motif signature appears at 420–423; the sequence is CVIL.

Part of the SCF (SKP1-CUL1-F-box) E3 ubiquitin-protein ligase complex SCF(FBXL2) composed of CUL1, SKP1, RBX1 and FBXL2. Interacts with calmodulin; may antagonize substrate ubiquitination by SCF(FBXL2). May interact with PIK3R1. Interacts with PTPN13. Phosphorylated by GSK-beta (GSK3B), promoting recognition by FBXO3, leading to its ubiquitination by the SCF(FBXO3) complex. Post-translationally, ubiquitinated at Lys-201 by the SCF(FBXO3) complex in response to lipopolysaccharide (LPS), leading to its degradation by the proteasome.

The protein localises to the membrane. It participates in protein modification; protein ubiquitination. Its function is as follows. Calcium-activated substrate recognition component of the SCF (SKP1-cullin-F-box protein) E3 ubiquitin-protein ligase complex, SCF(FBXL2), which mediates the ubiquitination and subsequent proteasomal degradation of target proteins. Unlike many F-box proteins, FBXL2 does not seem to target phosphodegron within its substrates but rather calmodulin-binding motifs and is thereby antagonized by calmodulin. This is the case for the cyclins CCND2 and CCND3 which polyubiquitination and subsequent degradation are inhibited by calmodulin. Through CCND2 and CCND3 degradation induces cell-cycle arrest in G(0). SCF(FBXL2) also mediates PIK3R2 ubiquitination and proteasomal degradation thereby regulating phosphatidylinositol 3-kinase signaling and autophagy. PCYT1A monoubiquitination by SCF(FBXL2) and subsequent degradation regulates synthesis of phosphatidylcholine, which is utilized for formation of membranes and of pulmonary surfactant. The SCF(FBXL2) complex acts as a regulator of inflammation by mediating ubiquitination and degradation of TRAF proteins (TRAF1, TRAF2, TRAF3, TRAF4, TRAF5 and TRAF6). The SCF(FBXL2) complex acts as a negative regulator of the NLRP3 inflammasome by mediating ubiquitination and degradation of NLRP3. This Bos taurus (Bovine) protein is F-box/LRR-repeat protein 2.